We begin with the raw amino-acid sequence, 270 residues long: NAD(P)H-hydrate epimerase (270 aa).

One can recognise a YjeF N-terminal domain in the interval 25–234; sequence FQQLMDLMQN…DLLAPEEIYQ (210 aa). 73–77 provides a ligand contact to (6S)-NADPHX; the sequence is DNGGQ. The K(+) site is built by asparagine 74 and aspartate 144. (6S)-NADPHX is bound by residues 148–154 and glutamate 177; that span reads GVGLYGH. Threonine 180 is a binding site for K(+).

It belongs to the NnrE/AIBP family. Requires K(+) as cofactor.

It catalyses the reaction (6R)-NADHX = (6S)-NADHX. It carries out the reaction (6R)-NADPHX = (6S)-NADPHX. Its function is as follows. Catalyzes the epimerization of the S- and R-forms of NAD(P)HX, a damaged form of NAD(P)H that is a result of enzymatic or heat-dependent hydration. This is a prerequisite for the S-specific NAD(P)H-hydrate dehydratase to allow the repair of both epimers of NAD(P)HX. This is NAD(P)H-hydrate epimerase from Legionella pneumophila (strain Paris).